The following is a 674-amino-acid chain: CRS2-associated factor 1, chloroplastic (674 aa).

The N-terminal 54 residues, 1–54 (MATARLPSRSFLSPAQQSYPRLPASVRLCLSHHEQPPTGPKRHRRAATSHPAFS), are a transit peptide targeting the chloroplast. The tract at residues 31-61 (SHHEQPPTGPKRHRRAATSHPAFSAAARGRA) is disordered. The segment covering 48–57 (TSHPAFSAAA) has biased composition (low complexity). 2 consecutive CRM domains span residues 183 to 279 (EPLT…TRPC) and 301 to 397 (GGLT…LPPL). A CRS2 binding region spans residues 554-576 (GLLCLLEQAIHSGRALVLSEDEL).

In terms of assembly, interacts with CRS2 and RNA. Part of large ribonucleo-protein complexes that include group IIB introns, CRS2 and CAF1.

The protein resides in the plastid. It is found in the chloroplast stroma. Its function is as follows. Required for the splicing of group IIB introns in chloroplasts. Forms splicing particles with CRS2. Interacts with RNA and confers intron specificity of the splicing particles. This Zea mays (Maize) protein is CRS2-associated factor 1, chloroplastic (CAF1).